The primary structure comprises 124 residues: Small ribosomal subunit protein uS12 (124 aa).

Residues 1 to 25 form a disordered region; it reads MPTFNQLVRNGRKPPRWKTSSPALE. Residue Asp-89 is modified to 3-methylthioaspartic acid. Residues 104-124 form a disordered region; that stretch reads TAGVANRKQSRSKYGAKRPKS. The segment covering 111 to 124 has biased composition (basic residues); it reads KQSRSKYGAKRPKS.

It belongs to the universal ribosomal protein uS12 family. Part of the 30S ribosomal subunit. Contacts proteins S8 and S17. May interact with IF1 in the 30S initiation complex.

Its function is as follows. With S4 and S5 plays an important role in translational accuracy. In terms of biological role, interacts with and stabilizes bases of the 16S rRNA that are involved in tRNA selection in the A site and with the mRNA backbone. Located at the interface of the 30S and 50S subunits, it traverses the body of the 30S subunit contacting proteins on the other side and probably holding the rRNA structure together. The combined cluster of proteins S8, S12 and S17 appears to hold together the shoulder and platform of the 30S subunit. This is Small ribosomal subunit protein uS12 from Solibacter usitatus (strain Ellin6076).